Reading from the N-terminus, the 45-residue chain is Pyruvate dehydrogenase E1 component (45 aa).

In terms of assembly, homodimer. Thiamine diphosphate is required as a cofactor.

It carries out the reaction N(6)-[(R)-lipoyl]-L-lysyl-[protein] + pyruvate + H(+) = N(6)-[(R)-S(8)-acetyldihydrolipoyl]-L-lysyl-[protein] + CO2. Its function is as follows. The pyruvate dehydrogenase complex catalyzes the overall conversion of pyruvate to acetyl-CoA and CO(2). It contains multiple copies of three enzymatic components: pyruvate dehydrogenase (E1), dihydrolipoamide acetyltransferase (E2) and lipoamide dehydrogenase (E3). This Azotobacter vinelandii protein is Pyruvate dehydrogenase E1 component.